The primary structure comprises 570 residues: Urease subunit alpha (570 aa).

The Urease domain maps to 135–570; it reads GGLDIHIHFN…ELPLAKRYSL (436 aa). The Ni(2+) site is built by histidine 140, histidine 142, and lysine 219. N6-carboxylysine is present on lysine 219. Histidine 221 provides a ligand contact to substrate. Ni(2+) is bound by residues histidine 248 and histidine 274. The Proton donor role is filled by histidine 322. A Ni(2+)-binding site is contributed by aspartate 362.

This sequence belongs to the metallo-dependent hydrolases superfamily. Urease alpha subunit family. Heterotrimer of UreA (gamma), UreB (beta) and UreC (alpha) subunits. Three heterotrimers associate to form the active enzyme. The cofactor is Ni cation. Post-translationally, carboxylation allows a single lysine to coordinate two nickel ions.

It is found in the cytoplasm. It catalyses the reaction urea + 2 H2O + H(+) = hydrogencarbonate + 2 NH4(+). Its pathway is nitrogen metabolism; urea degradation; CO(2) and NH(3) from urea (urease route): step 1/1. The chain is Urease subunit alpha from Haloquadratum walsbyi (strain DSM 16790 / HBSQ001).